The chain runs to 360 residues: Biotin synthase (360 aa).

Positions 83–315 (FCGKYFDLCT…KSFLRYCGGR (233 aa)) constitute a Radical SAM core domain. Residues Cys101, Cys105, and Cys108 each coordinate [4Fe-4S] cluster. Residues Ser145, Cys180, Cys240, and Arg310 each contribute to the [2Fe-2S] cluster site.

It belongs to the radical SAM superfamily. Biotin synthase family. Homodimer. It depends on [4Fe-4S] cluster as a cofactor. [2Fe-2S] cluster serves as cofactor.

It carries out the reaction (4R,5S)-dethiobiotin + (sulfur carrier)-SH + 2 reduced [2Fe-2S]-[ferredoxin] + 2 S-adenosyl-L-methionine = (sulfur carrier)-H + biotin + 2 5'-deoxyadenosine + 2 L-methionine + 2 oxidized [2Fe-2S]-[ferredoxin]. The protein operates within cofactor biosynthesis; biotin biosynthesis; biotin from 7,8-diaminononanoate: step 2/2. In terms of biological role, catalyzes the conversion of dethiobiotin (DTB) to biotin by the insertion of a sulfur atom into dethiobiotin via a radical-based mechanism. The sequence is that of Biotin synthase from Fusobacterium nucleatum subsp. nucleatum (strain ATCC 25586 / DSM 15643 / BCRC 10681 / CIP 101130 / JCM 8532 / KCTC 2640 / LMG 13131 / VPI 4355).